The chain runs to 1094 residues: Carbamoyl phosphate synthase large chain (1094 aa).

Positions 1-402 (MPRRSDLHRI…AFQKALRALE (402 aa)) are carboxyphosphate synthetic domain. Residues R129, R169, G175, G176, R208, L210, E215, G241, V242, H243, Q285, and E299 each coordinate ATP. An ATP-grasp 1 domain is found at 133–328 (GEAMEKIGLR…IARIGAKLAV (196 aa)). 3 residues coordinate Mg(2+): Q285, E299, and N301. Mn(2+)-binding residues include Q285, E299, and N301. The tract at residues 403–552 (TGRSGWTIAE…YLYGNYDEES (150 aa)) is oligomerization domain. The interval 553–936 (EAATEGRKKV…AFMKSQLAAD (384 aa)) is carbamoyl phosphate synthetic domain. The ATP-grasp 2 domain occupies 679–870 (EAIARELGIE…LPSVAARLML (192 aa)). Positions 715, 754, 756, 761, 786, 787, 788, 789, 829, and 841 each coordinate ATP. Residues Q829, E841, and N843 each coordinate Mg(2+). The Mn(2+) site is built by Q829, E841, and N843. The region spanning 937–1077 (NALPREGTVF…QEWHEILRAP (141 aa)) is the MGS-like domain. The tract at residues 937 to 1094 (NALPREGTVF…AGSTQPAGVA (158 aa)) is allosteric domain.

This sequence belongs to the CarB family. In terms of assembly, composed of two chains; the small (or glutamine) chain promotes the hydrolysis of glutamine to ammonia, which is used by the large (or ammonia) chain to synthesize carbamoyl phosphate. Tetramer of heterodimers (alpha,beta)4. The cofactor is Mg(2+). Requires Mn(2+) as cofactor.

It carries out the reaction hydrogencarbonate + L-glutamine + 2 ATP + H2O = carbamoyl phosphate + L-glutamate + 2 ADP + phosphate + 2 H(+). The enzyme catalyses hydrogencarbonate + NH4(+) + 2 ATP = carbamoyl phosphate + 2 ADP + phosphate + 2 H(+). The protein operates within amino-acid biosynthesis; L-arginine biosynthesis; carbamoyl phosphate from bicarbonate: step 1/1. Its pathway is pyrimidine metabolism; UMP biosynthesis via de novo pathway; (S)-dihydroorotate from bicarbonate: step 1/3. Large subunit of the glutamine-dependent carbamoyl phosphate synthetase (CPSase). CPSase catalyzes the formation of carbamoyl phosphate from the ammonia moiety of glutamine, carbonate, and phosphate donated by ATP, constituting the first step of 2 biosynthetic pathways, one leading to arginine and/or urea and the other to pyrimidine nucleotides. The large subunit (synthetase) binds the substrates ammonia (free or transferred from glutamine from the small subunit), hydrogencarbonate and ATP and carries out an ATP-coupled ligase reaction, activating hydrogencarbonate by forming carboxy phosphate which reacts with ammonia to form carbamoyl phosphate. This is Carbamoyl phosphate synthase large chain from Gemmatimonas aurantiaca (strain DSM 14586 / JCM 11422 / NBRC 100505 / T-27).